The following is a 121-amino-acid chain: Ribosome-binding factor A (121 aa).

It belongs to the RbfA family. In terms of assembly, monomer. Binds 30S ribosomal subunits, but not 50S ribosomal subunits or 70S ribosomes.

The protein localises to the cytoplasm. Functionally, one of several proteins that assist in the late maturation steps of the functional core of the 30S ribosomal subunit. Associates with free 30S ribosomal subunits (but not with 30S subunits that are part of 70S ribosomes or polysomes). Required for efficient processing of 16S rRNA. May interact with the 5'-terminal helix region of 16S rRNA. The sequence is that of Ribosome-binding factor A from Clostridium kluyveri (strain NBRC 12016).